The following is a 112-amino-acid chain: Transmembrane protein 14 homolog (112 aa).

The next 4 membrane-spanning stretches (helical) occupy residues phenylalanine 9 to glycine 26, leucine 36 to leucine 53, valine 60 to glycine 77, and isoleucine 87 to isoleucine 109.

The protein belongs to the TMEM14 family.

The protein localises to the membrane. The polypeptide is Transmembrane protein 14 homolog (Dictyostelium discoideum (Social amoeba)).